We begin with the raw amino-acid sequence, 173 residues long: Small ribosomal subunit protein uS5 (173 aa).

Positions 18 to 81 constitute an S5 DRBM domain; the sequence is YVEKLVKLNR…EKAKANMVTF (64 aa).

The protein belongs to the universal ribosomal protein uS5 family. In terms of assembly, part of the 30S ribosomal subunit. Contacts proteins S4 and S8.

With S4 and S12 plays an important role in translational accuracy. In terms of biological role, located at the back of the 30S subunit body where it stabilizes the conformation of the head with respect to the body. The polypeptide is Small ribosomal subunit protein uS5 (Treponema denticola (strain ATCC 35405 / DSM 14222 / CIP 103919 / JCM 8153 / KCTC 15104)).